The sequence spans 185 residues: Thiol:disulfide interchange protein DsbE (185 aa).

The Cytoplasmic segment spans residues 1 to 4 (MKRN). The helical transmembrane segment at 5-25 (VLLLPLLIFLLIAAALLWQLA) threads the bilayer. Over 26-185 (RNAQGDDPTN…WDRYSREAAQ (160 aa)) the chain is Periplasmic. The region spanning 39–177 (ALTGKPVPAF…WESELKPLWD (139 aa)) is the Thioredoxin domain. An intrachain disulfide couples cysteine 80 to cysteine 83.

It belongs to the thioredoxin family. DsbE subfamily.

The protein resides in the cell inner membrane. Involved in disulfide bond formation. Catalyzes a late, reductive step in the assembly of periplasmic c-type cytochromes, probably the reduction of disulfide bonds of the apocytochrome c to allow covalent linkage with the heme. Possible subunit of a heme lyase. The polypeptide is Thiol:disulfide interchange protein DsbE (dsbE1) (Salmonella typhimurium (strain LT2 / SGSC1412 / ATCC 700720)).